The sequence spans 94 residues: Probable Fe(2+)-trafficking protein (94 aa).

This sequence belongs to the Fe(2+)-trafficking protein family.

Its function is as follows. Could be a mediator in iron transactions between iron acquisition and iron-requiring processes, such as synthesis and/or repair of Fe-S clusters in biosynthetic enzymes. This Alcanivorax borkumensis (strain ATCC 700651 / DSM 11573 / NCIMB 13689 / SK2) protein is Probable Fe(2+)-trafficking protein.